Here is a 364-residue protein sequence, read N- to C-terminus: Probable dual-specificity RNA methyltransferase RlmN (364 aa).

Glu-106 acts as the Proton acceptor in catalysis. In terms of domain architecture, Radical SAM core spans 112–350; the sequence is YPRRNTVCIS…SCTVRDTRGR (239 aa). Cys-119 and Cys-356 form a disulfide bridge. Residues Cys-126, Cys-130, and Cys-133 each coordinate [4Fe-4S] cluster. S-adenosyl-L-methionine-binding positions include 177 to 178, Ser-211, 234 to 236, and Asn-313; these read GE and SLH. Cys-356 (S-methylcysteine intermediate) is an active-site residue.

Belongs to the radical SAM superfamily. RlmN family. Requires [4Fe-4S] cluster as cofactor.

The protein resides in the cytoplasm. It catalyses the reaction adenosine(2503) in 23S rRNA + 2 reduced [2Fe-2S]-[ferredoxin] + 2 S-adenosyl-L-methionine = 2-methyladenosine(2503) in 23S rRNA + 5'-deoxyadenosine + L-methionine + 2 oxidized [2Fe-2S]-[ferredoxin] + S-adenosyl-L-homocysteine. It carries out the reaction adenosine(37) in tRNA + 2 reduced [2Fe-2S]-[ferredoxin] + 2 S-adenosyl-L-methionine = 2-methyladenosine(37) in tRNA + 5'-deoxyadenosine + L-methionine + 2 oxidized [2Fe-2S]-[ferredoxin] + S-adenosyl-L-homocysteine. Specifically methylates position 2 of adenine 2503 in 23S rRNA and position 2 of adenine 37 in tRNAs. The protein is Probable dual-specificity RNA methyltransferase RlmN of Mycobacterium bovis (strain ATCC BAA-935 / AF2122/97).